A 775-amino-acid chain; its full sequence is GRIP and coiled-coil domain-containing protein 1 (775 aa).

Residues Ser13–Val61 are a coiled coil. Residues Asp84–Asp93 are compositionally biased toward basic and acidic residues. Disordered regions lie at residues Asp84–Glu153 and Gly614–Leu639. Low complexity-rich tracts occupy residues Ser94–Thr110, Ala133–Gly147, and Asp629–Ser638. Residues Glu153–Leu763 adopt a coiled-coil conformation. In terms of domain architecture, GRIP spans Gln713–Leu763.

The protein resides in the cytoplasm. Its subcellular location is the golgi apparatus membrane. Functionally, probably involved in maintaining Golgi structure. In Homo sapiens (Human), this protein is GRIP and coiled-coil domain-containing protein 1 (GCC1).